The following is a 550-amino-acid chain: Dihydroxy-acid dehydratase (550 aa).

Residue Asp78 coordinates Mg(2+). Position 119 (Cys119) interacts with [2Fe-2S] cluster. Mg(2+) contacts are provided by Asp120 and Lys121. Lys121 carries the N6-carboxylysine modification. Cys191 lines the [2Fe-2S] cluster pocket. Mg(2+) is bound at residue Glu440. Ser466 functions as the Proton acceptor in the catalytic mechanism.

The protein belongs to the IlvD/Edd family. Homodimer. [2Fe-2S] cluster serves as cofactor. Mg(2+) is required as a cofactor.

It carries out the reaction (2R)-2,3-dihydroxy-3-methylbutanoate = 3-methyl-2-oxobutanoate + H2O. The enzyme catalyses (2R,3R)-2,3-dihydroxy-3-methylpentanoate = (S)-3-methyl-2-oxopentanoate + H2O. The protein operates within amino-acid biosynthesis; L-isoleucine biosynthesis; L-isoleucine from 2-oxobutanoate: step 3/4. It participates in amino-acid biosynthesis; L-valine biosynthesis; L-valine from pyruvate: step 3/4. Functionally, functions in the biosynthesis of branched-chain amino acids. Catalyzes the dehydration of (2R,3R)-2,3-dihydroxy-3-methylpentanoate (2,3-dihydroxy-3-methylvalerate) into 2-oxo-3-methylpentanoate (2-oxo-3-methylvalerate) and of (2R)-2,3-dihydroxy-3-methylbutanoate (2,3-dihydroxyisovalerate) into 2-oxo-3-methylbutanoate (2-oxoisovalerate), the penultimate precursor to L-isoleucine and L-valine, respectively. This chain is Dihydroxy-acid dehydratase, found in Methanococcus aeolicus (strain ATCC BAA-1280 / DSM 17508 / OCM 812 / Nankai-3).